Consider the following 254-residue polypeptide: MANLGYWLLALFVATWTDVGLCKKRPKPGGWNTGGSRYPGQGNPGGNRYPPQGGGTWGQPHGGGWGQPHGGGWGQPHGGGWGQPHGGGWGQGGGTHSQWNKPSKPKTNMKHVAGAAAAGAVVGGLGGYMLGSAMSRPMIHFGNDWEDRYYRENMYRYPNQVYYRPVDQYNNQNNFVHDCVNITIKQHTVTTTTKGENFTETDVKMMERVVEQMCVTQYQKESQAYYDGRRSSAVLFSSPPMILLISFLIFLIVG.

An N-terminal signal peptide occupies residues 1–22; sequence MANLGYWLLALFVATWTDVGLC. Residues 23 to 231 form an interaction with GRB2, ERI3 and SYN1 region; the sequence is KKRPKPGGWN…SQAYYDGRRS (209 aa). The tract at residues 25–107 is disordered; that stretch reads RPKPGGWNTG…QWNKPSKPKT (83 aa). 5 tandem repeats follow at residues 51–59, 60–67, 68–75, 76–83, and 84–91. The 5 X 8 AA tandem repeats of P-H-G-G-G-W-G-Q stretch occupies residues 51-91; that stretch reads PQGGGTWGQPHGGGWGQPHGGGWGQPHGGGWGQPHGGGWGQ. Residues 52–95 are compositionally biased toward gly residues; sequence QGGGTWGQPHGGGWGQPHGGGWGQPHGGGWGQPHGGGWGQGGGT. Positions 61, 62, 63, 69, 70, 71, 77, 78, 79, 85, 86, and 87 each coordinate Cu(2+). Cys179 and Cys214 are oxidised to a cystine. N-linked (GlcNAc...) asparagine glycosylation is found at Asn181 and Asn197. Residue Ser231 is the site of GPI-anchor amidated serine attachment. Residues 232–254 constitute a propeptide, removed in mature form; the sequence is SAVLFSSPPMILLISFLIFLIVG.

Belongs to the prion family. In terms of assembly, monomer and homodimer. Has a tendency to aggregate into amyloid fibrils containing a cross-beta spine, formed by a steric zipper of superposed beta-strands. Soluble oligomers may represent an intermediate stage on the path to fibril formation. Copper binding may promote oligomerization. Interacts with GRB2, APP, ERI3/PRNPIP and SYN1. Mislocalized cytosolically exposed PrP interacts with MGRN1; this interaction alters MGRN1 subcellular location and causes lysosomal enlargement. Interacts with KIAA1191.

Its subcellular location is the cell membrane. The protein resides in the golgi apparatus. Functionally, its primary physiological function is unclear. Has cytoprotective activity against internal or environmental stresses. May play a role in neuronal development and synaptic plasticity. May be required for neuronal myelin sheath maintenance. May play a role in iron uptake and iron homeostasis. Soluble oligomers are toxic to cultured neuroblastoma cells and induce apoptosis (in vitro). Association with GPC1 (via its heparan sulfate chains) targets PRNP to lipid rafts. Also provides Cu(2+) or Zn(2+) for the ascorbate-mediated GPC1 deaminase degradation of its heparan sulfate side chains. This Sigmodon hispidus (Hispid cotton rat) protein is Major prion protein (PRNP).